Here is an 821-residue protein sequence, read N- to C-terminus: YFSHRPKEKVRTDSNNENSVPKDFENVDNSNFAPRTQKQKHQPELAKKPLSRQKERLQRKLGAQDKGQGQSVLGKGPKEVLPPREKAPGNSSQGKDLSRHSHSRKSGGGGSPETKSDQVPKCDISGKEAISALTRAKSKHCRQEIAETYCRHKLGLLMPEKVARFCPLEGKANKNVQWDEDAVEYMPPNPVRIAFVLVVHGRASRQLQRMFKAIYHKDHFYYIHVDKRSNYLHRQVLQFSRQYDNVRVTSWRMATIWGGASLLSTYLQSMRDLLEMTDWPWDFFINLSAADYPIRTNDQLVAFLSRYRDMNFLKSHGRDNARFIRKQDLDRLFLECDTHMWRLGDRRIPEGIAVDGGSDWFLLNRKFVEYVAFSTDDLVTKMKQFYSYTLLPAESFFHTVLENSPHCDTMVDNNLRITNWNRKLGCKCQYKHIVDWCGCSPNDFKPQDFHRFQQTARPTFFARKFEAIVNQEIIGQLDSYLYGNYPAGTPGLRSYWENVYDEPDGIQSLSDVALTMYHSFIRLGLRRAESSLHTDGENSCRYYPMGHPASVHLYFLADRFQGFLIKHHVTNLAVSKLETLETWMMPKKVFKVASPPSDFGRLQFSEVGTDWDAKERLFRNFGGLLGPMDEPVGMQKWGKGPNVTVTVIWVDPVNVIAATYDILIESTAEFTHYKPPLNLPLRPGVWTVKILHHWVPVAETKFLVAPLTFSNKQPIKPEEALKLHNGPPRSAYMEQSFQSLNPVLSLHINPAQVEQARKNAAFTGTALEAWLVGGTWTAMDVCATGPTACPVMQTCSQTAWSSFSPDPKSELGAVKPDGRLR.

Residues 1 to 121 (YFSHRPKEKV…PETKSDQVPK (121 aa)) are disordered. Residues 1–821 (YFSHRPKEKV…GAVKPDGRLR (821 aa)) lie on the Lumenal side of the membrane. Positions 9–25 (KVRTDSNNENSVPKDFE) are enriched in basic and acidic residues. Positions 27–36 (VDNSNFAPRT) are enriched in polar residues. Composition is skewed to basic and acidic residues over residues 41–58 (HQPE…ERLQ) and 76–87 (GPKEVLPPREKA). N-linked (GlcNAc...) asparagine glycosylation occurs at N90. Cystine bridges form between C122–C150, C166–C407, C426–C439, and C428–C437. UDP-alpha-D-xylose contacts are provided by residues V198, D226, and 255 to 257 (TIW). An N-linked (GlcNAc...) asparagine glycan is attached at N286. 359 to 360 (DW) contacts UDP-alpha-D-xylose. UDP-alpha-D-xylose is bound by residues S440 and 463-464 (RK). Intrachain disulfides connect C540-C789 and C782-C795. A glycan (N-linked (GlcNAc...) asparagine) is linked at N642. Residues 801–821 (SSFSPDPKSELGAVKPDGRLR) form a disordered region.

This sequence belongs to the glycosyltransferase 14 family. XylT subfamily. Monomer. A divalent metal cation serves as cofactor. Post-translationally, contains 7 disulfide bonds. In terms of processing, N-glycosylated.

Its subcellular location is the golgi apparatus membrane. It catalyses the reaction UDP-alpha-D-xylose + L-seryl-[protein] = 3-O-(beta-D-xylosyl)-L-seryl-[protein] + UDP + H(+). It participates in glycan metabolism; chondroitin sulfate biosynthesis. It functions in the pathway glycan metabolism; heparan sulfate biosynthesis. In terms of biological role, catalyzes the first step in the biosynthesis of chondroitin sulfate and dermatan sulfate proteoglycans, such as DCN. Transfers D-xylose from UDP-D-xylose to specific serine residues of the core protein. Required for normal maturation of chondrocytes during bone development, normal onset of ossification and normal embryonic and postnatal skeleton development, especially of the long bones. The chain is Xylosyltransferase 1 (Xylt1) from Rattus norvegicus (Rat).